The following is a 552-amino-acid chain: Thermosome subunit beta (552 aa).

The tract at residues 531 to 552 (AGKKGGSEPGGKKEKEEKSSED) is disordered. Residues 540–552 (GGKKEKEEKSSED) show a composition bias toward basic and acidic residues.

It belongs to the TCP-1 chaperonin family. Forms a heterooligomeric complex of two stacked nine-membered rings; one of alpha and the other of beta subunits. Sometimes called a 'rosettasome'.

It localises to the cytoplasm. The catalysed reaction is ATP + H2O = ADP + phosphate + H(+). Molecular chaperone; binds unfolded polypeptides in vitro, stimulates protein folding and has ATPase activity. One of the most abundant proteins in the cell at all temperatures. The sequence is that of Thermosome subunit beta (thsB) from Saccharolobus shibatae (strain ATCC 51178 / DSM 5389 / JCM 8931 / NBRC 15437 / B12) (Sulfolobus shibatae).